A 439-amino-acid polypeptide reads, in one-letter code: Lipid-A-disaccharide synthase (439 aa).

Residues Met-1–Leu-35 are disordered.

This sequence belongs to the LpxB family.

The catalysed reaction is a lipid X + a UDP-2-N,3-O-bis[(3R)-3-hydroxyacyl]-alpha-D-glucosamine = a lipid A disaccharide + UDP + H(+). It functions in the pathway bacterial outer membrane biogenesis; LPS lipid A biosynthesis. Condensation of UDP-2,3-diacylglucosamine and 2,3-diacylglucosamine-1-phosphate to form lipid A disaccharide, a precursor of lipid A, a phosphorylated glycolipid that anchors the lipopolysaccharide to the outer membrane of the cell. The protein is Lipid-A-disaccharide synthase of Xanthomonas euvesicatoria pv. vesicatoria (strain 85-10) (Xanthomonas campestris pv. vesicatoria).